A 217-amino-acid polypeptide reads, in one-letter code: LexA repressor (217 aa).

The H-T-H motif DNA-binding region spans 28–48 (RAEIAAEFGFSSPNAAEEHLR). Catalysis depends on for autocatalytic cleavage activity residues Ser136 and Lys173.

This sequence belongs to the peptidase S24 family. In terms of assembly, homodimer.

It catalyses the reaction Hydrolysis of Ala-|-Gly bond in repressor LexA.. Represses a number of genes involved in the response to DNA damage (SOS response), including recA and lexA. In the presence of single-stranded DNA, RecA interacts with LexA causing an autocatalytic cleavage which disrupts the DNA-binding part of LexA, leading to derepression of the SOS regulon and eventually DNA repair. This Cupriavidus necator (strain ATCC 17699 / DSM 428 / KCTC 22496 / NCIMB 10442 / H16 / Stanier 337) (Ralstonia eutropha) protein is LexA repressor.